The primary structure comprises 239 residues: Probable transcriptional regulatory protein BCQ_0605 (239 aa).

It belongs to the TACO1 family. YeeN subfamily.

The protein resides in the cytoplasm. This is Probable transcriptional regulatory protein BCQ_0605 from Bacillus cereus (strain Q1).